A 266-amino-acid polypeptide reads, in one-letter code: Vitamin B12-binding protein (266 aa).

Positions 1–22 (MAKSLFRALVALSFLAPLWLNA) are cleaved as a signal peptide. The region spanning 25–266 (RVITLSPANT…QLCNALSQVD (242 aa)) is the Fe/B12 periplasmic-binding domain. Cyanocob(III)alamin is bound by residues Tyr50 and 242–246 (DWFER). Cys183 and Cys259 form a disulfide bridge.

Belongs to the BtuF family. As to quaternary structure, the complex is composed of two ATP-binding proteins (BtuD), two transmembrane proteins (BtuC) and a solute-binding protein (BtuF).

Its subcellular location is the periplasm. Its function is as follows. Part of the ABC transporter complex BtuCDF involved in vitamin B12 import. Binds vitamin B12 and delivers it to the periplasmic surface of BtuC. This chain is Vitamin B12-binding protein (btuF), found in Escherichia coli (strain K12).